A 471-amino-acid polypeptide reads, in one-letter code: Vanillate/3-O-methylgallate O-demethylase (471 aa).

Tyrosine 31 is a substrate binding site. Glutamine 57 lines the (6S)-5,6,7,8-tetrahydrofolate pocket. Histidine 60 is a binding site for substrate. Positions 93 and 120 each coordinate (6S)-5,6,7,8-tetrahydrofolate. Arginine 122 serves as a coordination point for substrate. (6S)-5,6,7,8-tetrahydrofolate-binding residues include glutamine 165 and glutamate 215. 247–250 (YPSN) provides a ligand contact to substrate. Tryptophan 256 is a (6S)-5,6,7,8-tetrahydrofolate binding site.

It belongs to the GcvT family. In terms of assembly, homodimer.

It catalyses the reaction vanillate + (6S)-5,6,7,8-tetrahydrofolate = (6S)-5-methyl-5,6,7,8-tetrahydrofolate + 3,4-dihydroxybenzoate. The enzyme catalyses 3-O-methylgallate + (6S)-5,6,7,8-tetrahydrofolate = 3,4,5-trihydroxybenzoate + (6S)-5-methyl-5,6,7,8-tetrahydrofolate. It participates in secondary metabolite metabolism; lignin degradation. Involved in the catabolism of vanillate and syringate. Catalyzes the transfer of a methyl moiety from vanillate or 3-O-methylgallate (3MGA) to tetrahydrofolate, forming protocatechuate (PCA) or gallate, respectively, and methyl-tetrahydrofolate. Has similar activities with both substrates. Cannot use syringate. Uses an ordered, sequential kinetic mechanism. In Sphingobium sp. (strain NBRC 103272 / SYK-6), this protein is Vanillate/3-O-methylgallate O-demethylase.